Reading from the N-terminus, the 402-residue chain is Beta-ketoacyl-[acyl-carrier-protein] synthase III B, chloroplastic (402 aa).

Catalysis depends on residues Cys-178, His-328, and Asn-358.

The protein belongs to the thiolase-like superfamily. FabH family.

It is found in the plastid. It localises to the chloroplast. The catalysed reaction is malonyl-[ACP] + acetyl-CoA + H(+) = 3-oxobutanoyl-[ACP] + CO2 + CoA. Its pathway is lipid metabolism; fatty acid biosynthesis. Functionally, catalyzes the condensation reaction of fatty acid synthesis by the addition to an acyl acceptor of two carbons from malonyl-ACP. KAS III catalyzes the first condensation reaction which initiates fatty acid synthesis and may therefore play a role in governing the total rate of fatty acid production. Possesses both acetoacetyl-ACP synthase and acetyl transacylase activities. The polypeptide is Beta-ketoacyl-[acyl-carrier-protein] synthase III B, chloroplastic (KAS3B) (Cuphea wrightii (Wright's waxweed)).